A 303-amino-acid chain; its full sequence is tRNA pseudouridine synthase B (303 aa).

D47 functions as the Nucleophile in the catalytic mechanism.

This sequence belongs to the pseudouridine synthase TruB family. Type 1 subfamily.

The catalysed reaction is uridine(55) in tRNA = pseudouridine(55) in tRNA. Functionally, responsible for synthesis of pseudouridine from uracil-55 in the psi GC loop of transfer RNAs. The protein is tRNA pseudouridine synthase B of Legionella pneumophila subsp. pneumophila (strain Philadelphia 1 / ATCC 33152 / DSM 7513).